The chain runs to 610 residues: UvrABC system protein C (610 aa).

The GIY-YIG domain maps to 16–94; sequence HQPGVYRMYN…IKQYLPKYNV (79 aa). A UVR domain is found at 204–239; that stretch reads QQVLKQLIEKMEVASQQLRFEDAAKFRDQIQAIRRV.

This sequence belongs to the UvrC family. In terms of assembly, interacts with UvrB in an incision complex.

It localises to the cytoplasm. The UvrABC repair system catalyzes the recognition and processing of DNA lesions. UvrC both incises the 5' and 3' sides of the lesion. The N-terminal half is responsible for the 3' incision and the C-terminal half is responsible for the 5' incision. In Vibrio parahaemolyticus serotype O3:K6 (strain RIMD 2210633), this protein is UvrABC system protein C.